A 116-amino-acid polypeptide reads, in one-letter code: Aspartate 1-decarboxylase (116 aa).

Ser25 serves as the catalytic Schiff-base intermediate with substrate; via pyruvic acid. Ser25 is subject to Pyruvic acid (Ser). Thr57 contributes to the substrate binding site. The active-site Proton donor is the Tyr58. Substrate is bound at residue Gly73 to Ala75.

It belongs to the PanD family. In terms of assembly, heterooctamer of four alpha and four beta subunits. Requires pyruvate as cofactor. Is synthesized initially as an inactive proenzyme, which is activated by self-cleavage at a specific serine bond to produce a beta-subunit with a hydroxyl group at its C-terminus and an alpha-subunit with a pyruvoyl group at its N-terminus.

It localises to the cytoplasm. It catalyses the reaction L-aspartate + H(+) = beta-alanine + CO2. Its pathway is cofactor biosynthesis; (R)-pantothenate biosynthesis; beta-alanine from L-aspartate: step 1/1. In terms of biological role, catalyzes the pyruvoyl-dependent decarboxylation of aspartate to produce beta-alanine. The chain is Aspartate 1-decarboxylase from Leptospira interrogans serogroup Icterohaemorrhagiae serovar Lai (strain 56601).